A 115-amino-acid chain; its full sequence is Large ribosomal subunit protein eL30 (115 aa).

Residues serine 10 and serine 16 each carry the phosphoserine modification. At lysine 26 the chain carries N6-acetyllysine; alternate. Residue lysine 26 forms a Glycyl lysine isopeptide (Lys-Gly) (interchain with G-Cter in SUMO2); alternate linkage.

Belongs to the eukaryotic ribosomal protein eL30 family. Component of the large ribosomal subunit.

Its subcellular location is the cytoplasm. Its function is as follows. Component of the large ribosomal subunit. The ribosome is a large ribonucleoprotein complex responsible for the synthesis of proteins in the cell. This chain is Large ribosomal subunit protein eL30 (RPL30), found in Oryctolagus cuniculus (Rabbit).